Consider the following 161-residue polypeptide: MPSFDIVSEVDLQEVDNAVNQTVKEITTRYDFKGSKSTLTREDAVITILADDAYKLEQVTEVLKGKMVRRSVDPHFLDFGTVEPASGAMVRQNVTVKQGIESEFAKKIVKTIKNAKLKVQAAIQGDQVRVTGKKRDDLQEAIALLKSQSFEQPLQFNNFRD.

Belongs to the YajQ family.

Functionally, nucleotide-binding protein. This is Nucleotide-binding protein Mmc1_1670 from Magnetococcus marinus (strain ATCC BAA-1437 / JCM 17883 / MC-1).